Here is a 139-residue protein sequence, read N- to C-terminus: uncharacterized protein (139 aa).

The HIT domain occupies 5-114 (IFCKIINKEL…IPRFKNDGFG (110 aa)). Residues 99–103 (HTHFH) carry the Histidine triad motif motif.

This is an uncharacterized protein from Borreliella burgdorferi (strain ATCC 35210 / DSM 4680 / CIP 102532 / B31) (Borrelia burgdorferi).